The primary structure comprises 381 residues: 4-hydroxy-3-methylbut-2-en-1-yl diphosphate synthase (flavodoxin) (381 aa).

4 residues coordinate [4Fe-4S] cluster: Cys-273, Cys-276, Cys-308, and Glu-315.

It belongs to the IspG family. [4Fe-4S] cluster serves as cofactor.

The catalysed reaction is (2E)-4-hydroxy-3-methylbut-2-enyl diphosphate + oxidized [flavodoxin] + H2O + 2 H(+) = 2-C-methyl-D-erythritol 2,4-cyclic diphosphate + reduced [flavodoxin]. The protein operates within isoprenoid biosynthesis; isopentenyl diphosphate biosynthesis via DXP pathway; isopentenyl diphosphate from 1-deoxy-D-xylulose 5-phosphate: step 5/6. Its function is as follows. Converts 2C-methyl-D-erythritol 2,4-cyclodiphosphate (ME-2,4cPP) into 1-hydroxy-2-methyl-2-(E)-butenyl 4-diphosphate. The chain is 4-hydroxy-3-methylbut-2-en-1-yl diphosphate synthase (flavodoxin) from Gluconobacter oxydans (strain 621H) (Gluconobacter suboxydans).